A 284-amino-acid chain; its full sequence is Phosphoribosylaminoimidazole-succinocarboxamide synthase (284 aa).

This sequence belongs to the SAICAR synthetase family.

It carries out the reaction 5-amino-1-(5-phospho-D-ribosyl)imidazole-4-carboxylate + L-aspartate + ATP = (2S)-2-[5-amino-1-(5-phospho-beta-D-ribosyl)imidazole-4-carboxamido]succinate + ADP + phosphate + 2 H(+). The protein operates within purine metabolism; IMP biosynthesis via de novo pathway; 5-amino-1-(5-phospho-D-ribosyl)imidazole-4-carboxamide from 5-amino-1-(5-phospho-D-ribosyl)imidazole-4-carboxylate: step 1/2. This is Phosphoribosylaminoimidazole-succinocarboxamide synthase from Chromobacterium violaceum (strain ATCC 12472 / DSM 30191 / JCM 1249 / CCUG 213 / NBRC 12614 / NCIMB 9131 / NCTC 9757 / MK).